A 102-amino-acid chain; its full sequence is Putative septation protein SpoVG 1 (102 aa).

Belongs to the SpoVG family.

Its function is as follows. Could be involved in septation. In Listeria innocua serovar 6a (strain ATCC BAA-680 / CLIP 11262), this protein is Putative septation protein SpoVG 1.